A 149-amino-acid polypeptide reads, in one-letter code: MAYADNEYRCFVGGLAWATDEQSIERCFNEFGEVFDSKIIIDRETGRSKGFRFVTFKDEDSMRTAIDRMNGQELDGRNITAQARGSGTRGGMVGGYGSGGYRGRRDQGGYNRGGGGGYGGGYGGDRREGGYGDGGYGGQGRSEGGSWRN.

Residues 8-83 (YRCFVGGLAW…LDGRNITAQA (76 aa)) enclose the RRM domain. Positions 80 to 149 (TAQARGSGTR…GRSEGGSWRN (70 aa)) are disordered. Gly residues-rich tracts occupy residues 87–101 (GTRG…SGGY), 110–123 (YNRG…GGYG), and 131–143 (YGDG…GRSE).

It belongs to the GR-RBP family.

In terms of biological role, possibly has a role in RNA transcription or processing during stress. This is Probable glycine-rich RNA-binding protein 1 (RBG1) from Arabidopsis thaliana (Mouse-ear cress).